A 324-amino-acid polypeptide reads, in one-letter code: Bile salt hydrolase/transferase (324 aa).

The active-site Nucleophile; acyl-thioester intermediate is the C2. 2 residues coordinate deoxycholate: C2 and R16. Position 79 (N79) interacts with taurine.

This sequence belongs to the peptidase C59 family. In terms of assembly, homotetramer. The tetramer consists of a dimer of dimers.

It carries out the reaction glycocholate + H2O = cholate + glycine. The catalysed reaction is glycodeoxycholate + H2O = deoxycholate + glycine. It catalyses the reaction chenodeoxycholate + glycine = glycochenodeoxycholate + H2O. The enzyme catalyses cholate + taurine = taurocholate + H2O. It carries out the reaction taurodeoxycholate + H2O = deoxycholate + taurine. The catalysed reaction is taurochenodeoxycholate + H2O = chenodeoxycholate + taurine. It catalyses the reaction an L-alpha-amino acid + cholate = an N-choloyl-L-alpha-amino acid + H2O. The enzyme catalyses an L-alpha-amino acid + taurocholate = an N-choloyl-L-alpha-amino acid + taurine. It carries out the reaction glycocholate + an L-alpha-amino acid = an N-choloyl-L-alpha-amino acid + glycine. It participates in lipid metabolism; bile acid biosynthesis. Its function is as follows. Possesses dual functions in bile acid metabolism. Acts as a bile salt hydrolase that catalyzes the deconjugation of glycine- and taurine-linked bile salts, which occurs naturally in the intestines of animals, releasing amino acid residues and deconjugated bile salts (bile acids). Can hydrolyze the amide bond in the bile salts glycocholate (GCA), glycodeoxycholate (GDCA), glycochenodeoxycholate (GCDCA), taurocholate (TCA), taurodeoxycholate (TDCA) and taurochenodeoxycholate (TCDCA). Shows a preference for glycine-conjugated bile acids as substrates. Also acts as an amine N-acyltransferase that conjugates a wide variety of amino acids to conjugated and non-conjugated bile acids, thus producing bacterial bile acid amidates (BBAAs) - also named microbially conjugated bile acids (MCBAs) - in the gastrointestinal tract. These BBAAs may facilitate communication between the microbiota and host through the activation of host ligand-activated transcription factors. In Lactiplantibacillus plantarum (strain ATCC BAA-793 / NCIMB 8826 / WCFS1) (Lactobacillus plantarum), this protein is Bile salt hydrolase/transferase.